The sequence spans 437 residues: MKVYIETMGCAMNSRDSEHLLSELSKLDYKETNDPKTADLILINTCSVREKPERKLFSEIGQFAKIKKPNAKIGVCGCTASHMGADILKKAPSVSFVLGARNVSKISQVIHKEKAVEVAIDYDESAYAFEFFEKKAQIRSLLNISIGCDKKCAYCIVPHTRGKEISIPMDLILKEAEKLANNGTKELMLLGQNVNNYGARFSSEHAKVDFSDLLDKLSEIQGIERIRFTSPHPLHMNDGFLERFAKNPKVCKSIHMPLQSGSSAVLKMMRRGYSKEWFLNRVERLKALVPEVGISTDIIVGFPNESDKDFEDTMEVLEKVRFDTLYSFIYSPRPFTEAGAWKERVPLEVSSSRLERLQNRHKEILEEKAKLEVGKTHVVLVENRREMDNQIVGFEGRSDTGKFIEVTCKEKRNPGELVKVEIISHSKGRLMAATKGN.

Positions 1–115 (MKVYIETMGC…ISQVIHKEKA (115 aa)) constitute an MTTase N-terminal domain. C10, C46, C78, C148, C152, and C155 together coordinate [4Fe-4S] cluster. In terms of domain architecture, Radical SAM core spans 134–367 (KKAQIRSLLN…QNRHKEILEE (234 aa)). The region spanning 370 to 436 (KLEVGKTHVV…KGRLMAATKG (67 aa)) is the TRAM domain.

It belongs to the methylthiotransferase family. MiaB subfamily. In terms of assembly, monomer. The cofactor is [4Fe-4S] cluster.

Its subcellular location is the cytoplasm. It carries out the reaction N(6)-dimethylallyladenosine(37) in tRNA + (sulfur carrier)-SH + AH2 + 2 S-adenosyl-L-methionine = 2-methylsulfanyl-N(6)-dimethylallyladenosine(37) in tRNA + (sulfur carrier)-H + 5'-deoxyadenosine + L-methionine + A + S-adenosyl-L-homocysteine + 2 H(+). Functionally, catalyzes the methylthiolation of N6-(dimethylallyl)adenosine (i(6)A), leading to the formation of 2-methylthio-N6-(dimethylallyl)adenosine (ms(2)i(6)A) at position 37 in tRNAs that read codons beginning with uridine. The polypeptide is tRNA-2-methylthio-N(6)-dimethylallyladenosine synthase (Helicobacter pylori (strain ATCC 700392 / 26695) (Campylobacter pylori)).